The sequence spans 138 residues: Holo-[acyl-carrier-protein] synthase (138 aa).

Positions 8 and 60 each coordinate Mg(2+).

Belongs to the P-Pant transferase superfamily. AcpS family. It depends on Mg(2+) as a cofactor.

The protein localises to the cytoplasm. The catalysed reaction is apo-[ACP] + CoA = holo-[ACP] + adenosine 3',5'-bisphosphate + H(+). Transfers the 4'-phosphopantetheine moiety from coenzyme A to a Ser of acyl-carrier-protein. The sequence is that of Holo-[acyl-carrier-protein] synthase from Magnetococcus marinus (strain ATCC BAA-1437 / JCM 17883 / MC-1).